The sequence spans 197 residues: Proteinase inhibitor type-2 (197 aa).

Positions 1-24 are cleaved as a signal peptide; sequence MAVHKVSFVAHLLVLGMFLLLVDA. 3 repeat units span residues 24-80, 81-140, and 141-196. 8 disulfide bridges follow: C27–C115, C31–C111, C39–C121, C51–C88, C54–C72, C55–C84, C61–C97, and C114–C132.

It belongs to the protease inhibitor I20 (potato type II proteinase inhibitor) family.

The polypeptide is Proteinase inhibitor type-2 (Nicotiana tabacum (Common tobacco)).